The chain runs to 257 residues: UPF0246 protein AHA_3667 (257 aa).

This sequence belongs to the UPF0246 family.

In Aeromonas hydrophila subsp. hydrophila (strain ATCC 7966 / DSM 30187 / BCRC 13018 / CCUG 14551 / JCM 1027 / KCTC 2358 / NCIMB 9240 / NCTC 8049), this protein is UPF0246 protein AHA_3667.